The sequence spans 251 residues: 2,3-bisphosphoglycerate-dependent phosphoglycerate mutase (251 aa).

Residues 11-18, 24-25, arginine 63, 90-93, lysine 101, 117-118, and 184-185 contribute to the substrate site; these read RHGESDWN, TG, ERHY, RR, and GN. Histidine 12 functions as the Tele-phosphohistidine intermediate in the catalytic mechanism. Glutamate 90 serves as the catalytic Proton donor/acceptor.

The protein belongs to the phosphoglycerate mutase family. BPG-dependent PGAM subfamily.

It catalyses the reaction (2R)-2-phosphoglycerate = (2R)-3-phosphoglycerate. It participates in carbohydrate degradation; glycolysis; pyruvate from D-glyceraldehyde 3-phosphate: step 3/5. Its function is as follows. Catalyzes the interconversion of 2-phosphoglycerate and 3-phosphoglycerate. The polypeptide is 2,3-bisphosphoglycerate-dependent phosphoglycerate mutase (Mycobacterium marinum (strain ATCC BAA-535 / M)).